We begin with the raw amino-acid sequence, 421 residues long: MADISLDELIRKRGAAAKGRLNARPGVGGVRSRVGIQQGLLSQSTRTATFQQRFDARQKIGLSDARLKLGVKDAREKLLQKDARFRIKGKVQDAREMLNSRKQQTTVPQKPRQVADAREKISLKRSSPAAFINPPIGTVTPALKLTKTIQVPQQKAMAPLHPHPAGMRINVVNNHQAKQNLYDLDEDDDGIASVPTKQMKFAASGGFLHHMAGLSSSKLSMSKALPLTKVVQNDAYTAPALPSSIRTKALTNMSRTLVNKEEPPKELPAAEPVLSPLEGTKMTVNNLHPRVTEEDIVELFCVCGALKRARLVHPGVAEVVFVKKDDAITAYKKYNNRCLDGQPMKCNLHMNGNVITSDQPILLRLSDSPSMKKESELPRRVNSASSSNPPAEVDPDTILKALFKSSGASVTTQPTEFKIKL.

Ala-2 carries the post-translational modification N-acetylalanine. Phosphoserine is present on Ser-5. Arg-33 is modified (omega-N-methylarginine). A phosphoserine mark is found at Ser-44 and Ser-127. Thr-140 is subject to Phosphothreonine. Lys-200 participates in a covalent cross-link: Glycyl lysine isopeptide (Lys-Gly) (interchain with G-Cter in SUMO2). Residues Ser-204, Ser-215, and Ser-217 each carry the phosphoserine modification. Lys-223 participates in a covalent cross-link: Glycyl lysine isopeptide (Lys-Gly) (interchain with G-Cter in SUMO2). Ser-244 is modified (phosphoserine). Lys-248 participates in a covalent cross-link: Glycyl lysine isopeptide (Lys-Gly) (interchain with G-Cter in SUMO2). A Phosphoserine modification is found at Ser-275. Positions 280 to 351 (TKMTVNNLHP…QPMKCNLHMN (72 aa)) constitute an RRM domain. Residues 370 to 379 (SMKKESELPR) are compositionally biased toward basic and acidic residues. The segment at 370–393 (SMKKESELPRRVNSASSSNPPAEV) is disordered. A Glycyl lysine isopeptide (Lys-Gly) (interchain with G-Cter in SUMO2) cross-link involves residue Lys-372. 2 positions are modified to phosphoserine; by RPS6KB1: Ser-383 and Ser-385. Lys-418 is covalently cross-linked (Glycyl lysine isopeptide (Lys-Gly) (interchain with G-Cter in SUMO2)).

In terms of assembly, interacts with POLD2. Interacts with NCBP1 and EIF4A3. Associates with the multiprotein exon junction complex (EJC). Interacts with RPS6KB1 (activated). Interacts with ERH. Interacts with THOC2, DDX39B and ZC3H11A; the interactions are ATP-dependent and indicative for an association with the TREX complex. Phosphorylated at Ser-383 and Ser-385 by RPS6KB1.

It is found in the nucleus. The protein resides in the nucleus speckle. Its subcellular location is the cytoplasm. In terms of biological role, is involved in regulation of translation. Is preferentially associated with CBC-bound spliced mRNA-protein complexes during the pioneer round of mRNA translation. Contributes to enhanced translational efficiency of spliced over nonspliced mRNAs. Recruits activated ribosomal protein S6 kinase beta-1 I/RPS6KB1 to newly synthesized mRNA. Involved in nuclear mRNA export; probably mediated by association with the TREX complex. The protein is Polymerase delta-interacting protein 3 (POLDIP3) of Homo sapiens (Human).